An 87-amino-acid chain; its full sequence is MAHHKSALKRIKQNKRKQFRNKSIRSGLRTFIKNVREAVEAKDAAKAKEALQAAIPVIDKAATKGIIHANAASRNVSRLTKLVNTLG.

A disordered region spans residues 1–22; it reads MAHHKSALKRIKQNKRKQFRNK.

The protein belongs to the bacterial ribosomal protein bS20 family.

Its function is as follows. Binds directly to 16S ribosomal RNA. This Geobacter metallireducens (strain ATCC 53774 / DSM 7210 / GS-15) protein is Small ribosomal subunit protein bS20.